The sequence spans 85 residues: Antitoxin VapB4 (85 aa).

Belongs to the phD/YefM antitoxin family. Interacts with cognate toxin VapC4.

In terms of biological role, antitoxin component of a type II toxin-antitoxin (TA) system. Antitoxin that counteracts the effect of the VapC4 toxin. The sequence is that of Antitoxin VapB4 (vapB4) from Mycobacterium tuberculosis (strain CDC 1551 / Oshkosh).